We begin with the raw amino-acid sequence, 130 residues long: Small ribosomal subunit protein uS8 (130 aa).

Belongs to the universal ribosomal protein uS8 family. As to quaternary structure, part of the 30S ribosomal subunit.

One of the primary rRNA binding proteins, it binds directly to 16S rRNA central domain where it helps coordinate assembly of the platform of the 30S subunit. The protein is Small ribosomal subunit protein uS8 of Methanosphaera stadtmanae (strain ATCC 43021 / DSM 3091 / JCM 11832 / MCB-3).